The chain runs to 535 residues: Alcohol O-acetyltransferase 2 (535 aa).

Residues 19-36 (GHARRMGHLENYFAVLSR) form a membrane association region. Active-site charge relay system residues include His-189 and Asp-193. The tract at residues 515–532 (RGEWESFCKLFYQTIGEF) is membrane association.

It belongs to the ATF1 alcohol acetyltransferase family.

It is found in the lipid droplet. It localises to the endoplasmic reticulum membrane. The catalysed reaction is an aliphatic alcohol + acetyl-CoA = an acetyl ester + CoA. Can use acetyl-CoA to synthesize acetate esters from various alcohols, producing ethyl acetate, isoamyl acetate, isobutyl acetate, butyl acetate, hexyl acetate, heptyl acetate and octyl acetate. ATF2 seems to play only a minor role in the acetate ester synthesis, compared to ATF1. Plays an active role in the detoxification hydroxysteroids and possibly certain phytochemicals, in association with the efflux pumps PDR5 and SNQ2. This chain is Alcohol O-acetyltransferase 2, found in Saccharomyces cerevisiae (strain ATCC 204508 / S288c) (Baker's yeast).